A 177-amino-acid chain; its full sequence is Endoribonuclease YbeY (177 aa).

Histidine 118, histidine 122, and histidine 128 together coordinate Zn(2+).

The protein belongs to the endoribonuclease YbeY family. Requires Zn(2+) as cofactor.

It localises to the cytoplasm. Single strand-specific metallo-endoribonuclease involved in late-stage 70S ribosome quality control and in maturation of the 3' terminus of the 16S rRNA. The protein is Endoribonuclease YbeY of Mycolicibacterium paratuberculosis (strain ATCC BAA-968 / K-10) (Mycobacterium paratuberculosis).